Here is a 502-residue protein sequence, read N- to C-terminus: Large ribosomal subunit protein uL2m (502 aa).

A disordered region spans residues 458-502 (AMNPVDHPHGGGEGRTKGGRPSVSPWGKPTKAGFRAGVGVGKRRI). A compositionally biased stretch (basic and acidic residues) spans 463–473 (DHPHGGGEGRT). Residues 493–502 (AGVGVGKRRI) show a composition bias toward gly residues.

This sequence belongs to the universal ribosomal protein uL2 family.

The protein localises to the mitochondrion. This Oryza sativa (Rice) protein is Large ribosomal subunit protein uL2m (RPL2).